Reading from the N-terminus, the 363-residue chain is 3-isopropylmalate dehydrogenase (363 aa).

An NAD(+)-binding site is contributed by 78–91 (XXXXXXXXXXXXXX). Residues Arg-99, Arg-109, Arg-138, and Asp-227 each coordinate substrate. Asp-227, Asp-251, and Asp-255 together coordinate Mg(2+). Position 285–297 (285–297 (GSAPDIEGKNIAN)) interacts with NAD(+).

This sequence belongs to the isocitrate and isopropylmalate dehydrogenases family. LeuB type 1 subfamily. As to quaternary structure, homodimer. The cofactor is Mg(2+). Mn(2+) serves as cofactor.

It is found in the cytoplasm. It catalyses the reaction (2R,3S)-3-isopropylmalate + NAD(+) = 4-methyl-2-oxopentanoate + CO2 + NADH. The protein operates within amino-acid biosynthesis; L-leucine biosynthesis; L-leucine from 3-methyl-2-oxobutanoate: step 3/4. Its function is as follows. Catalyzes the oxidation of 3-carboxy-2-hydroxy-4-methylpentanoate (3-isopropylmalate) to 3-carboxy-4-methyl-2-oxopentanoate. The product decarboxylates to 4-methyl-2 oxopentanoate. In Buchnera aphidicola subsp. Uroleucon solidaginis, this protein is 3-isopropylmalate dehydrogenase.